The sequence spans 590 residues: Aspartate--tRNA(Asp/Asn) ligase (590 aa).

Glutamate 175 provides a ligand contact to L-aspartate. Residues 199–202 (QQYK) form an aspartate region. Residues arginine 221 and histidine 450 each coordinate L-aspartate. 221–223 (RDE) provides a ligand contact to ATP. Glutamate 484 serves as a coordination point for ATP. An L-aspartate-binding site is contributed by arginine 491. ATP is bound at residue 536 to 539 (GVDR).

Belongs to the class-II aminoacyl-tRNA synthetase family. Type 1 subfamily. As to quaternary structure, homodimer.

The protein resides in the cytoplasm. The enzyme catalyses tRNA(Asx) + L-aspartate + ATP = L-aspartyl-tRNA(Asx) + AMP + diphosphate. In terms of biological role, aspartyl-tRNA synthetase with relaxed tRNA specificity since it is able to aspartylate not only its cognate tRNA(Asp) but also tRNA(Asn). Reaction proceeds in two steps: L-aspartate is first activated by ATP to form Asp-AMP and then transferred to the acceptor end of tRNA(Asp/Asn). In Bradyrhizobium diazoefficiens (strain JCM 10833 / BCRC 13528 / IAM 13628 / NBRC 14792 / USDA 110), this protein is Aspartate--tRNA(Asp/Asn) ligase.